Here is a 260-residue protein sequence, read N- to C-terminus: HTH-type transcriptional activator FapR (260 aa).

The HTH araC/xylS-type domain occupies 154-251; sequence ERIVTLLFSD…GVTPKKFEIG (98 aa). DNA-binding regions (H-T-H motif) lie at residues 171–192 and 218–241; these read SDIA…EQEC and IGMI…KEYY.

As to quaternary structure, homodimer.

In terms of biological role, positive regulator of the expression of the 987P operon for the fimbrial protein in enterotoxigenic E.coli. The protein is HTH-type transcriptional activator FapR of Escherichia coli.